The sequence spans 349 residues: Mitogen-activated protein kinase sty1 (349 aa).

The Protein kinase domain occupies 20 to 299 (YSDLQPIGMG…AADALAHNYL (280 aa)). Residues 26 to 34 (IGMGAFGLV) and lysine 49 contribute to the ATP site. The active-site Proton acceptor is the aspartate 141. Threonine 171 bears the Phosphothreonine mark. The TXY motif lies at 171-173 (TGY). Tyrosine 173 carries the post-translational modification Phosphotyrosine. The residue at position 175 (serine 175) is a Phosphoserine. Threonine 176 bears the Phosphothreonine mark. The TXY motif lies at 176 to 178 (TRY).

Belongs to the protein kinase superfamily. Ser/Thr protein kinase family. MAP kinase subfamily. HOG1 sub-subfamily. In terms of assembly, interacts with cdc37, cmk2, hal4, sin1 and srk1. It depends on Mg(2+) as a cofactor. In terms of processing, dually phosphorylated on Thr-171 and Tyr-173, which activates the enzyme. Phosphorylated by wis1 in response to osmotic stress, nutrient limitation, hydrogen peroxide and arsenite. Dephosphorylated by pyp1 and pyp2.

The protein localises to the cytoplasm. It is found in the nucleus. It carries out the reaction L-seryl-[protein] + ATP = O-phospho-L-seryl-[protein] + ADP + H(+). The catalysed reaction is L-threonyl-[protein] + ATP = O-phospho-L-threonyl-[protein] + ADP + H(+). Activated by the MAPK kinase wisl, and negatively regulated by pypl and pyp2 tyrosine phosphatases. Proline-directed serine/threonine-protein kinase involved in a signal transduction pathway that is activated by changes in the osmolarity of the extracellular environment. Controls osmotic regulation of transcription of target genes. Involved in osmoregulation and stress response pathways leading to an efficient start of sexual differentiation. Supports translation initiation and facilitates adaptation to environmental stress in part through reducing eIF2-alpha phosphorylation. Links the cell-cycle G2/M control with changes in the extracellular environment that affect cell physiology. Phosphorylates atf1 and mkp1. In conjunction with hal4, has a role in the cellular resistance to toxic cations such as Na(+), Li(+) and Ca(2+). Involved in resistance to arsenite, methylglyoxal and hydrogen peroxide. Involved in induction of thermotolerance in mRNA export, as well as in vacuolar fission. The chain is Mitogen-activated protein kinase sty1 (sty1) from Schizosaccharomyces pombe (strain 972 / ATCC 24843) (Fission yeast).